Reading from the N-terminus, the 197-residue chain is Segregation and condensation protein B (197 aa).

Belongs to the ScpB family. As to quaternary structure, homodimer. Homodimerization may be required to stabilize the binding of ScpA to the Smc head domains. Component of a cohesin-like complex composed of ScpA, ScpB and the Smc homodimer, in which ScpA and ScpB bind to the head domain of Smc. The presence of the three proteins is required for the association of the complex with DNA.

It localises to the cytoplasm. Participates in chromosomal partition during cell division. May act via the formation of a condensin-like complex containing Smc and ScpA that pull DNA away from mid-cell into both cell halves. This is Segregation and condensation protein B from Bacillus pumilus (strain SAFR-032).